A 194-amino-acid polypeptide reads, in one-letter code: MENYQLVLASTSPFRQQLLEKLAIPFSTLSPNCDETPLEGESPQQLVLRLAESKAQSCQINQPSLVIGSDQVCVINGNIVGKPHNRQNAIAQLTAQSGQSIVFYTGLAVYNSETGETRSCIDEFKVHFRPLTQAQIVRYVDKEQPFYCAGSFKSEGLGIALFEKLEGKDPNTLVGLPLIDLIDLLAQQGMQVLG.

D70 serves as the catalytic Proton acceptor.

Belongs to the Maf family. YceF subfamily. A divalent metal cation is required as a cofactor.

The protein localises to the cytoplasm. The enzyme catalyses N(7)-methyl-GTP + H2O = N(7)-methyl-GMP + diphosphate + H(+). Functionally, nucleoside triphosphate pyrophosphatase that hydrolyzes 7-methyl-GTP (m(7)GTP). May have a dual role in cell division arrest and in preventing the incorporation of modified nucleotides into cellular nucleic acids. The sequence is that of 7-methyl-GTP pyrophosphatase from Vibrio vulnificus (strain CMCP6).